A 205-amino-acid chain; its full sequence is Octanoyltransferase (205 aa).

The BPL/LPL catalytic domain maps to 30–205 (NLSDELVWLL…ILKQEFHKIF (176 aa)). Residues 68-75 (RGGKYTYH), 140-142 (AFG), and 153-155 (GIA) contribute to the substrate site. Cys171 functions as the Acyl-thioester intermediate in the catalytic mechanism.

This sequence belongs to the LipB family.

It localises to the cytoplasm. It carries out the reaction octanoyl-[ACP] + L-lysyl-[protein] = N(6)-octanoyl-L-lysyl-[protein] + holo-[ACP] + H(+). It participates in protein modification; protein lipoylation via endogenous pathway; protein N(6)-(lipoyl)lysine from octanoyl-[acyl-carrier-protein]: step 1/2. Catalyzes the transfer of endogenously produced octanoic acid from octanoyl-acyl-carrier-protein onto the lipoyl domains of lipoate-dependent enzymes. Lipoyl-ACP can also act as a substrate although octanoyl-ACP is likely to be the physiological substrate. The sequence is that of Octanoyltransferase from Wolbachia pipientis subsp. Culex pipiens (strain wPip).